Here is a 29-residue protein sequence, read N- to C-terminus: Brevinin-2Ra (29 aa).

A disulfide bridge connects residues Cys23 and Cys29.

In terms of tissue distribution, expressed by the skin glands.

It localises to the secreted. In terms of biological role, antimicrobial peptide. This is Brevinin-2Ra from Pelophylax ridibundus (Marsh frog).